The primary structure comprises 174 residues: Early nodulin-11 (174 aa).

An N-terminal signal peptide occupies residues 1–25; it reads MASFFLYSLGLVFLSALTLVPLGLA. The interval 28–174 is disordered; that stretch reads SPSHNMPPNP…GNQPPPSIHF (147 aa). Residues 53–65 are compositionally biased toward pro residues; that stretch reads YNPPIYKPPPTYK. The segment covering 70–83 has biased composition (low complexity); the sequence is KQPINKSPNKKPLL. A compositionally biased stretch (basic residues) spans 122–132; it reads PQKKPPSRKRP. Composition is skewed to pro residues over residues 134 to 150 and 159 to 174; these read NTPPNKKPPLPKPPVNK and KRPPPYGNQPPPSIHF.

It belongs to the plant proline-rich protein superfamily. In terms of tissue distribution, expressed in cotyledons, leaf vasculature, stomatal guard cells and trichomes. In the embryo, expressed in embryo suspensors, the epidermis and underlying tissues of the cotyledons, hypocotyls, and radicle in maturing embryos, and the outer cell layer of the endosperm.

The protein resides in the secreted. It localises to the cell wall. In terms of biological role, involved in the infection process during the plant-rhizobium interaction. Involved in actinorhizal root nodulation. Involved in symbiotic association with the nitrogen-fixing actinomycete Frankia spp. This chain is Early nodulin-11, found in Medicago truncatula (Barrel medic).